We begin with the raw amino-acid sequence, 396 residues long: G-protein coupled receptor 84 (396 aa).

Residues 1–26 (MWNSSDANFSCYHESVLGYRYVAVSW) are Extracellular-facing. Asn-3 and Asn-8 each carry an N-linked (GlcNAc...) asparagine glycan. A helical transmembrane segment spans residues 27–47 (GVVVAVTGTVGNVLTLLALAI). Residues 48 to 57 (QPKLRTRFNL) are Cytoplasmic-facing. The chain crosses the membrane as a helical span at residues 58–78 (LIANLTLADLLYCTLLQPFSV). Residues 79–94 (DTYLHLHWRTGATFCR) lie on the Extracellular side of the membrane. A helical membrane pass occupies residues 95 to 115 (VFGLLLFASNSVSILTLCLIA). Topologically, residues 116-144 (LGRYLLIAHPKLFPQVFSAKGIVLALVST) are cytoplasmic. Residues 145 to 165 (WVVGVASFAPLWPIYILVPVV) traverse the membrane as a helical segment. The Extracellular segment spans residues 166–180 (CTCSFDRIRGRPYTT). Residues 181–201 (ILMGIYFVLGLSSVGIFYCLI) form a helical membrane-spanning segment. The Cytoplasmic segment spans residues 202-320 (HRQVKRAAQA…SSEFGKVTRM (119 aa)). Ser-221 and Ser-224 each carry phosphoserine. Positions 244 to 311 (RLASGGPSEG…KGARRAPDSS (68 aa)) are disordered. The span at 247–260 (SGGPSEGISSEPVS) shows a compositional bias: low complexity. Thr-263 and Thr-264 each carry phosphothreonine. A helical membrane pass occupies residues 321–341 (CFAVFLCFALSYIPFLLLNIL). Over 342–352 (DARVQAPRVVH) the chain is Extracellular. Residues 353 to 373 (MLAANLTWLNGCINPVLYAAM) traverse the membrane as a helical segment. At 374–396 (NRQFRQAYGSILKRGPRSFHRLH) the chain is on the cytoplasmic side.

The protein belongs to the G-protein coupled receptor 1 family. As to quaternary structure, interacts with ARRB2 and ARR3. Phosphorylated by a subset of GPR84-activating ligands. Constitutively phosphorylated at Ser-221 and Ser-224 in the absence of 2-HTP. By contrast, Thr-263 and Thr-264 are phosphorylated only following prior cell treatment with 2-HTP. As to expression, expressed predominantly in hematopoietic tissues. High levels detected in the bone marrow and lower levels in the peripheral leukocytes and lung. Also expressed in brain, heart, muscle, colon, thymus, spleen, kidney, liver, placenta and intestine. Within the leukocyte population expression is higher in neutrophils and eosinophils relative to T- or B-lymphocytes.

It localises to the cell membrane. Functionally, g protein-coupled receptor that responds endogenously to dietary fatty acids or nutrient, specifically medium-chain free fatty acid (FFA) with carbon chain lengths of C9 to C14. Capric acid (C10:0), undecanoic acid (C11:0) and lauric acid (C12:0) are the most potent agonists. In immune cells, functions as a pro-inflammatory receptor via 6-OAU and promotes the expression of pro-inflammatory mediators such as TNFalpha, IL-6 and IL-12B as well as stimulating chemotactic responses through activation of signaling mediators AKT, ERK and NF-kappa-B. In addition, triggers increased bacterial adhesion and phagocytosis in macrophages and regulates pro-inflammatory function via enhancing NLRP3 inflammasome activation. Also plays an important role in inflammation by modulating neutrophil functions. Mechanistically, promotes neutrophil chemotaxis, reactive oxygen species (ROS) production and degranulation via LYN-AKT/ERK pathway. To regulate ROS, communicates with the two formyl peptide receptors FPR2 and FPR1 to control the NADPH oxidase activity in neutrophils. In Homo sapiens (Human), this protein is G-protein coupled receptor 84 (GPR84).